We begin with the raw amino-acid sequence, 558 residues long: Dihydroxy-acid dehydratase (558 aa).

Position 50 (C50) interacts with [2Fe-2S] cluster. D82 is a binding site for Mg(2+). [2Fe-2S] cluster is bound at residue C123. The Mg(2+) site is built by D124 and K125. At K125 the chain carries N6-carboxylysine. C195 is a [2Fe-2S] cluster binding site. Residue E447 coordinates Mg(2+). The active-site Proton acceptor is the S472.

This sequence belongs to the IlvD/Edd family. In terms of assembly, homodimer. It depends on [2Fe-2S] cluster as a cofactor. Mg(2+) serves as cofactor.

It catalyses the reaction (2R)-2,3-dihydroxy-3-methylbutanoate = 3-methyl-2-oxobutanoate + H2O. The enzyme catalyses (2R,3R)-2,3-dihydroxy-3-methylpentanoate = (S)-3-methyl-2-oxopentanoate + H2O. It functions in the pathway amino-acid biosynthesis; L-isoleucine biosynthesis; L-isoleucine from 2-oxobutanoate: step 3/4. The protein operates within amino-acid biosynthesis; L-valine biosynthesis; L-valine from pyruvate: step 3/4. In terms of biological role, functions in the biosynthesis of branched-chain amino acids. Catalyzes the dehydration of (2R,3R)-2,3-dihydroxy-3-methylpentanoate (2,3-dihydroxy-3-methylvalerate) into 2-oxo-3-methylpentanoate (2-oxo-3-methylvalerate) and of (2R)-2,3-dihydroxy-3-methylbutanoate (2,3-dihydroxyisovalerate) into 2-oxo-3-methylbutanoate (2-oxoisovalerate), the penultimate precursor to L-isoleucine and L-valine, respectively. This Saccharolobus islandicus (strain M.16.27) (Sulfolobus islandicus) protein is Dihydroxy-acid dehydratase.